The following is a 365-amino-acid chain: Isopentenyl-diphosphate delta-isomerase (365 aa).

Substrate is bound at residue 8 to 9; the sequence is RK. FMN contacts are provided by residues 67–69, Ser97, and Asn126; that span reads SIT. 97–99 lines the substrate pocket; that stretch reads SQR. Gln160 is a binding site for substrate. Residue Glu161 coordinates Mg(2+). Residues Lys192, Thr222, 272 to 274, and 293 to 294 each bind FMN; these read GIR and AL.

The protein belongs to the IPP isomerase type 2 family. In terms of assembly, homooctamer. Dimer of tetramers. FMN is required as a cofactor. The cofactor is NADPH. Mg(2+) serves as cofactor.

The protein resides in the cytoplasm. It catalyses the reaction isopentenyl diphosphate = dimethylallyl diphosphate. Involved in the biosynthesis of isoprenoids. Catalyzes the 1,3-allylic rearrangement of the homoallylic substrate isopentenyl (IPP) to its allylic isomer, dimethylallyl diphosphate (DMAPP). The protein is Isopentenyl-diphosphate delta-isomerase of Methanosarcina mazei (strain ATCC BAA-159 / DSM 3647 / Goe1 / Go1 / JCM 11833 / OCM 88) (Methanosarcina frisia).